The following is a 557-amino-acid chain: Membrane protein insertase YidC (557 aa).

Residues 7 to 27 (ILLVALAVVSYLLVLQWNQDY) form a helical membrane-spanning segment. The segment at 42 to 77 (ASPALPETVPGDSSTSADVPTAGSGNQVPDSAASTA) is disordered. A compositionally biased stretch (polar residues) spans 52–77 (GDSSTSADVPTAGSGNQVPDSAASTA). The next 3 helical transmembrane spans lie at 370–390 (WGWSIIVLTVIIKLAFFPLSA), 436–456 (LGGCLPILVQMPVFLALYWVL), and 514–534 (PIIFTFFFLWFPAGLVLYWVV).

This sequence belongs to the OXA1/ALB3/YidC family. Type 1 subfamily. Interacts with the Sec translocase complex via SecD. Specifically interacts with transmembrane segments of nascent integral membrane proteins during membrane integration.

The protein localises to the cell inner membrane. In terms of biological role, required for the insertion and/or proper folding and/or complex formation of integral membrane proteins into the membrane. Involved in integration of membrane proteins that insert both dependently and independently of the Sec translocase complex, as well as at least some lipoproteins. Aids folding of multispanning membrane proteins. The polypeptide is Membrane protein insertase YidC (Azotobacter vinelandii (strain DJ / ATCC BAA-1303)).